The primary structure comprises 1236 residues: DNA-directed RNA polymerase subunit beta (1236 aa).

The tract at residues 1193-1212 (PDVLDDDSYDQNNDEDIDEI) is disordered. Positions 1194–1212 (DVLDDDSYDQNNDEDIDEI) are enriched in acidic residues.

Belongs to the RNA polymerase beta chain family. As to quaternary structure, the RNAP catalytic core consists of 2 alpha, 1 beta, 1 beta' and 1 omega subunit. When a sigma factor is associated with the core the holoenzyme is formed, which can initiate transcription.

It catalyses the reaction RNA(n) + a ribonucleoside 5'-triphosphate = RNA(n+1) + diphosphate. Functionally, DNA-dependent RNA polymerase catalyzes the transcription of DNA into RNA using the four ribonucleoside triphosphates as substrates. In Clostridium beijerinckii (strain ATCC 51743 / NCIMB 8052) (Clostridium acetobutylicum), this protein is DNA-directed RNA polymerase subunit beta.